A 354-amino-acid polypeptide reads, in one-letter code: Homer protein homolog 1 (354 aa).

In terms of domain architecture, WH1 spans Met1–Ala110. Residue Gly2 is modified to N-acetylglycine. The segment at Lys114–Phe173 is disordered. Composition is skewed to polar residues over residues Ser138–Gly147 and Asp155–Phe173. Positions Lys181–Glu352 form a coiled coil. A required for tetramerization region spans residues Lys290 to Ser354. Ser306 carries the phosphoserine modification.

It belongs to the Homer family. As to quaternary structure, tetramer; this tetrameric structure is critical for forming the high-order complex with SHANK1, which in turn is necessary for the structural and functional integrity of dendritic spines. Interacts with GRM1, GRM5, ITPR1, DNM3, RYR1, RYR2 and SHANK3. Interacts with IFT57 and OPHN1. Isoform 1 encodes a coiled-coil structure that mediates homo- and heteromultimerization. Interacts with SHANK1; forms high-order polymerized complex with a mesh-like network structure, at least composed of SHANK1, HOMER1 and DLGAP1; the complex formation is SHANK1 multimerization dependent. Interacts with NFATC4. Interacts with DAGLA (via PPXXF motif); this interaction is required for the cell membrane localization of DAGLA. Interacts with SRGAP2.

The protein resides in the cytoplasm. The protein localises to the postsynaptic density. It is found in the synapse. It localises to the cell projection. Its subcellular location is the dendritic spine. In terms of biological role, postsynaptic density scaffolding protein. Binds and cross-links cytoplasmic regions of GRM1, GRM5, ITPR1, DNM3, RYR1, RYR2, SHANK1 and SHANK3. By physically linking GRM1 and GRM5 with ER-associated ITPR1 receptors, it aids the coupling of surface receptors to intracellular calcium release. May also couple GRM1 to PI3 kinase through its interaction with AGAP2. Isoform 1 regulates the trafficking and surface expression of GRM5. Isoform 3 acts as a natural dominant negative, in dynamic competition with constitutively expressed isoform 1 to regulate synaptic metabotropic glutamate function. Isoform 3, may be involved in the structural changes that occur at synapses during long-lasting neuronal plasticity and development. Forms a high-order complex with SHANK1, which in turn is necessary for the structural and functional integrity of dendritic spines. Negatively regulates T cell activation by inhibiting the calcineurin-NFAT pathway. Acts by competing with calcineurin/PPP3CA for NFAT protein binding, hence preventing NFAT activation by PPP3CA. The polypeptide is Homer protein homolog 1 (Homo sapiens (Human)).